A 269-amino-acid polypeptide reads, in one-letter code: Ribonuclease HII (269 aa).

The RNase H type-2 domain maps to 83 to 269 (YLIAGVDEVG…HRMSFLTNIL (187 aa)). 3 residues coordinate a divalent metal cation: D89, E90, and D185.

This sequence belongs to the RNase HII family. Mn(2+) is required as a cofactor. The cofactor is Mg(2+).

It localises to the cytoplasm. It carries out the reaction Endonucleolytic cleavage to 5'-phosphomonoester.. Endonuclease that specifically degrades the RNA of RNA-DNA hybrids. This Clostridium botulinum (strain Hall / ATCC 3502 / NCTC 13319 / Type A) protein is Ribonuclease HII.